Consider the following 293-residue polypeptide: Ribonuclease P/MRP protein subunit RPP1 (293 aa).

The protein belongs to the eukaryotic/archaeal RNase P protein component 3 family. As to quaternary structure, component of nuclear RNase P and RNase MRP complexes. RNase P consists of an RNA moiety and at least 9 protein subunits including POP1, POP3, POP4, POP5, POP6, POP7, POP8, RPP1 and RPR2. RNase MRP complex consists of an RNA moiety and at least 10 protein subunits including POP1, POP3, POP4, POP5, POP6, POP7, POP8, RMP1, RPP1 and SNM1, many of which are shared with the RNase P complex.

The protein localises to the nucleus. It carries out the reaction Endonucleolytic cleavage of RNA, removing 5'-extranucleotides from tRNA precursor.. Component of ribonuclease P, a protein complex that generates mature tRNA molecules by cleaving their 5'-ends. Also a component of RNase MRP, which cleaves pre-rRNA sequences. In Saccharomyces cerevisiae (strain ATCC 204508 / S288c) (Baker's yeast), this protein is Ribonuclease P/MRP protein subunit RPP1 (RPP1).